Reading from the N-terminus, the 549-residue chain is Protein X92 (549 aa).

The protein is Protein X92 of Trypanosoma brucei brucei.